Here is a 550-residue protein sequence, read N- to C-terminus: C-type lectin domain family 4 member F (550 aa).

The Cytoplasmic segment spans residues 1 to 42; that stretch reads MKEAELNRDVAKFCTDNQCVILQPQGLGPKSAAPMAPRTLRH. A helical; Signal-anchor for type II membrane protein membrane pass occupies residues 43–69; it reads VQAIVALVVVTVFFSLLALFVVVLQPW. Residues 70–550 lie on the Extracellular side of the membrane; the sequence is RQKQNEDHPV…DWSVARTDQS (481 aa). N-linked (GlcNAc...) asparagine glycans are attached at residues Asn-87, Asn-93, Asn-115, Asn-132, Asn-209, and Asn-255. The C-type lectin domain maps to 438–538; that stretch reads NFCVSQGAHL…GTAYNWVCKK (101 aa). Disulfide bonds link Cys-440-Cys-536 and Cys-516-Cys-528.

As to expression, kupffer cells.

It is found in the membrane. Receptor with an affinity for galactose and fucose. Could be involved in endocytosis. The polypeptide is C-type lectin domain family 4 member F (Clec4f) (Rattus norvegicus (Rat)).